The chain runs to 252 residues: Chitooligosaccharide deacetylase (252 aa).

His61 and His125 together coordinate Mg(2+).

Belongs to the YdjC deacetylase family. ChbG subfamily. In terms of assembly, homodimer. Mg(2+) is required as a cofactor.

It is found in the cytoplasm. It carries out the reaction N,N'-diacetylchitobiose + H2O = N-acetyl-beta-D-glucosaminyl-(1-&gt;4)-D-glucosamine + acetate. It catalyses the reaction diacetylchitobiose-6'-phosphate + H2O = N'-monoacetylchitobiose-6'-phosphate + acetate. The protein operates within glycan degradation; chitin degradation. Functionally, involved in the degradation of chitin. ChbG is essential for growth on the acetylated chitooligosaccharides chitobiose and chitotriose but is dispensable for growth on cellobiose and chitosan dimer, the deacetylated form of chitobiose. Deacetylation of chitobiose-6-P and chitotriose-6-P is necessary for both the activation of the chb promoter by the regulatory protein ChbR and the hydrolysis of phosphorylated beta-glucosides by the phospho-beta-glucosidase ChbF. Catalyzes the removal of only one acetyl group from chitobiose-6-P to yield monoacetylchitobiose-6-P, the inducer of ChbR and the substrate of ChbF. In Klebsiella pneumoniae (strain 342), this protein is Chitooligosaccharide deacetylase.